A 351-amino-acid chain; its full sequence is Heat-inducible transcription repressor HrcA (351 aa).

It belongs to the HrcA family.

In terms of biological role, negative regulator of class I heat shock genes (grpE-dnaK-dnaJ and groELS operons). Prevents heat-shock induction of these operons. The chain is Heat-inducible transcription repressor HrcA from Acetivibrio thermocellus (strain ATCC 27405 / DSM 1237 / JCM 9322 / NBRC 103400 / NCIMB 10682 / NRRL B-4536 / VPI 7372) (Clostridium thermocellum).